The primary structure comprises 297 residues: tRNA-cytidine(32) 2-sulfurtransferase (297 aa).

Positions 45 to 50 match the PP-loop motif motif; that stretch reads SGGKDS. The [4Fe-4S] cluster site is built by Cys-120, Cys-123, and Cys-211.

This sequence belongs to the TtcA family. In terms of assembly, homodimer. It depends on Mg(2+) as a cofactor. [4Fe-4S] cluster is required as a cofactor.

The protein localises to the cytoplasm. The catalysed reaction is cytidine(32) in tRNA + S-sulfanyl-L-cysteinyl-[cysteine desulfurase] + AH2 + ATP = 2-thiocytidine(32) in tRNA + L-cysteinyl-[cysteine desulfurase] + A + AMP + diphosphate + H(+). It participates in tRNA modification. Its function is as follows. Catalyzes the ATP-dependent 2-thiolation of cytidine in position 32 of tRNA, to form 2-thiocytidine (s(2)C32). The sulfur atoms are provided by the cysteine/cysteine desulfurase (IscS) system. This chain is tRNA-cytidine(32) 2-sulfurtransferase, found in Vibrio parahaemolyticus serotype O3:K6 (strain RIMD 2210633).